Here is a 119-residue protein sequence, read N- to C-terminus: Non-structural protein 3b (119 aa).

The DRBM domain occupies 2 to 83; that stretch reads DYVSLLNQFW…ARLICEQLQA (82 aa).

In terms of assembly, interacts with host RUNX1 isoform b.

The protein localises to the host nucleus. It is found in the host nucleolus. Its subcellular location is the host mitochondrion. Its function is as follows. Induces host cell G0/G1 arrest and apoptosis. The chain is Non-structural protein 3b from Tylonycteris pachypus (Lesser bamboo bat).